The chain runs to 1071 residues: DNA-directed RNA polymerase subunit beta (1071 aa).

This sequence belongs to the RNA polymerase beta chain family. In plastids the minimal PEP RNA polymerase catalytic core is composed of four subunits: alpha, beta, beta', and beta''. When a (nuclear-encoded) sigma factor is associated with the core the holoenzyme is formed, which can initiate transcription.

It localises to the plastid. Its subcellular location is the chloroplast. It catalyses the reaction RNA(n) + a ribonucleoside 5'-triphosphate = RNA(n+1) + diphosphate. In terms of biological role, DNA-dependent RNA polymerase catalyzes the transcription of DNA into RNA using the four ribonucleoside triphosphates as substrates. In Acorus gramineus (Dwarf sweet flag), this protein is DNA-directed RNA polymerase subunit beta.